A 101-amino-acid polypeptide reads, in one-letter code: Immunity protein CdiI-2 (101 aa).

Specifically interacts with the truncated CT fragment of cognate toxin protein CdiA-2, which inhibits CdiA-2 tRNA nuclease activity.

Functionally, immunity protein component of a toxin-immunity protein module, which functions as a cellular contact-dependent growth inhibition (CDI) system. CDI modules allow bacteria to communicate with and inhibit the growth of closely related neighboring bacteria in a contact-dependent fashion. Neutralizes the toxic activity of cognate toxin CdiA (C-terminal 301 residue CT fragment) upon expression in E.coli. Does not inhibit toxic activity of CdiA from other strains of B.pseudomallei. In terms of biological role, expression of this cdiAIB locus in B.thailandensis confers protection against other bacteria carrying the locus; growth inhibition requires cellular contact. This Burkholderia pseudomallei (strain 1026b) protein is Immunity protein CdiI-2 (cdiI2).